The following is a 567-amino-acid chain: Dihydroxy-acid dehydratase 1 (567 aa).

Cysteine 57 provides a ligand contact to [2Fe-2S] cluster. Aspartate 89 is a binding site for Mg(2+). Cysteine 130 provides a ligand contact to [2Fe-2S] cluster. 2 residues coordinate Mg(2+): aspartate 131 and lysine 132. Lysine 132 is subject to N6-carboxylysine. A [2Fe-2S] cluster-binding site is contributed by cysteine 202. Glutamate 454 serves as a coordination point for Mg(2+). The active-site Proton acceptor is the serine 480.

The protein belongs to the IlvD/Edd family. Homodimer. [2Fe-2S] cluster is required as a cofactor. Mg(2+) serves as cofactor.

It carries out the reaction (2R)-2,3-dihydroxy-3-methylbutanoate = 3-methyl-2-oxobutanoate + H2O. The enzyme catalyses (2R,3R)-2,3-dihydroxy-3-methylpentanoate = (S)-3-methyl-2-oxopentanoate + H2O. Its pathway is amino-acid biosynthesis; L-isoleucine biosynthesis; L-isoleucine from 2-oxobutanoate: step 3/4. It functions in the pathway amino-acid biosynthesis; L-valine biosynthesis; L-valine from pyruvate: step 3/4. In terms of biological role, functions in the biosynthesis of branched-chain amino acids. Catalyzes the dehydration of (2R,3R)-2,3-dihydroxy-3-methylpentanoate (2,3-dihydroxy-3-methylvalerate) into 2-oxo-3-methylpentanoate (2-oxo-3-methylvalerate) and of (2R)-2,3-dihydroxy-3-methylbutanoate (2,3-dihydroxyisovalerate) into 2-oxo-3-methylbutanoate (2-oxoisovalerate), the penultimate precursor to L-isoleucine and L-valine, respectively. The polypeptide is Dihydroxy-acid dehydratase 1 (Aromatoleum aromaticum (strain DSM 19018 / LMG 30748 / EbN1) (Azoarcus sp. (strain EbN1))).